A 327-amino-acid polypeptide reads, in one-letter code: Glycolipid sulfotransferase BCG_1434 (327 aa).

40-45 (KSGLTW) provides a ligand contact to 3'-phosphoadenylyl sulfate. Catalysis depends on His-97, which acts as the Proton acceptor. A 3'-phosphoadenylyl sulfate-binding site is contributed by 116–124 (RDPRDAAVS).

The protein belongs to the sulfotransferase 1 family.

In terms of biological role, involved in the synthesis of cell wall sulfolipids. The protein is Glycolipid sulfotransferase BCG_1434 of Mycobacterium bovis (strain BCG / Pasteur 1173P2).